The following is a 198-amino-acid chain: Phosphoheptose isomerase (198 aa).

Positions 34–196 (IVEALIRGNK…DDSLFPADHG (163 aa)) constitute an SIS domain. A substrate-binding site is contributed by 49 to 51 (NGG). Zn(2+) contacts are provided by His58 and Asn62. Residues Asn62, 91–92 (ND), 117–119 (STS), Ser122, and Gln172 each bind substrate. The Zn(2+) site is built by Gln172 and His180.

Belongs to the SIS family. GmhA subfamily. Homotetramer. Zn(2+) is required as a cofactor.

It is found in the cytoplasm. The enzyme catalyses 2 D-sedoheptulose 7-phosphate = D-glycero-alpha-D-manno-heptose 7-phosphate + D-glycero-beta-D-manno-heptose 7-phosphate. The protein operates within carbohydrate biosynthesis; D-glycero-D-manno-heptose 7-phosphate biosynthesis; D-glycero-alpha-D-manno-heptose 7-phosphate and D-glycero-beta-D-manno-heptose 7-phosphate from sedoheptulose 7-phosphate: step 1/1. Functionally, catalyzes the isomerization of sedoheptulose 7-phosphate in D-glycero-D-manno-heptose 7-phosphate. The protein is Phosphoheptose isomerase of Alteromonas mediterranea (strain DSM 17117 / CIP 110805 / LMG 28347 / Deep ecotype).